Reading from the N-terminus, the 340-residue chain is Ketol-acid reductoisomerase (NADP(+)) (340 aa).

The 180-residue stretch at 3–182 folds into the KARI N-terminal Rossmann domain; that stretch reads VTMYYEDDVE…GCARVGIIET (180 aa). Residues 26-29, Arg-49, Ser-53, and 83-86 contribute to the NADP(+) site; these read YGSQ and DELQ. His-108 is a catalytic residue. Residue Gly-134 coordinates NADP(+). The KARI C-terminal knotted domain maps to 183–328; that stretch reads TFKEETEEDL…AELRKAMPFT (146 aa). Mg(2+) contacts are provided by Asp-191, Glu-195, Glu-227, and Glu-231. Ser-252 contributes to the substrate binding site.

This sequence belongs to the ketol-acid reductoisomerase family. Requires Mg(2+) as cofactor.

It catalyses the reaction (2R)-2,3-dihydroxy-3-methylbutanoate + NADP(+) = (2S)-2-acetolactate + NADPH + H(+). The enzyme catalyses (2R,3R)-2,3-dihydroxy-3-methylpentanoate + NADP(+) = (S)-2-ethyl-2-hydroxy-3-oxobutanoate + NADPH + H(+). It participates in amino-acid biosynthesis; L-isoleucine biosynthesis; L-isoleucine from 2-oxobutanoate: step 2/4. The protein operates within amino-acid biosynthesis; L-valine biosynthesis; L-valine from pyruvate: step 2/4. Functionally, involved in the biosynthesis of branched-chain amino acids (BCAA). Catalyzes an alkyl-migration followed by a ketol-acid reduction of (S)-2-acetolactate (S2AL) to yield (R)-2,3-dihydroxy-isovalerate. In the isomerase reaction, S2AL is rearranged via a Mg-dependent methyl migration to produce 3-hydroxy-3-methyl-2-ketobutyrate (HMKB). In the reductase reaction, this 2-ketoacid undergoes a metal-dependent reduction by NADPH to yield (R)-2,3-dihydroxy-isovalerate. This chain is Ketol-acid reductoisomerase (NADP(+)), found in Lactococcus lactis subsp. lactis (strain IL1403) (Streptococcus lactis).